Here is a 231-residue protein sequence, read N- to C-terminus: Putative S-adenosylmethionine-dependent methyltransferase RcsF (231 aa).

Residues 5–142 (VSPIGYIRSC…YVPYADAVAD (138 aa)) form the TsaA-like domain. S-adenosyl-L-methionine-binding positions include 22–24 (PRQ), 63–64 (HQ), arginine 91, and 122–125 (LDGT).

This sequence belongs to the tRNA methyltransferase O family.

This is Putative S-adenosylmethionine-dependent methyltransferase RcsF (rcsF) from Pseudomonas aeruginosa (strain ATCC 15692 / DSM 22644 / CIP 104116 / JCM 14847 / LMG 12228 / 1C / PRS 101 / PAO1).